The chain runs to 310 residues: p-hydroxybenzoic acid efflux pump subunit AaeA (310 aa).

A helical transmembrane segment spans residues 12–32 (AITVVLVVLAFIAIFRAWSFY).

The protein belongs to the membrane fusion protein (MFP) (TC 8.A.1) family.

Its subcellular location is the cell inner membrane. Functionally, forms an efflux pump with AaeB. The chain is p-hydroxybenzoic acid efflux pump subunit AaeA from Cronobacter sakazakii (strain ATCC BAA-894) (Enterobacter sakazakii).